The chain runs to 1300 residues: Histone-lysine N-methyltransferase Suv4-20 (1300 aa).

The disordered stretch occupies residues 1–136 (MVVGSNHTRR…GSGSVVSGLN (136 aa)). Low complexity predominate over residues 14 to 62 (GSRFTNSSSSSSTSGGPTASASSTTSVTSSLATNSTSTSTAAALLSSMS). Residues 79-97 (QTNQQHHQVAHSQPHATHY) show a composition bias toward polar residues. Residues 116–128 (GSGGGSAGSGSGS) show a composition bias toward gly residues. One can recognise an SET domain in the interval 255–366 (EACYRYTLEE…VGEEITCFYG (112 aa)). Disordered regions lie at residues 432-490 (SRAN…GKEA), 535-574 (QQHH…QQMA), 669-744 (HQSQ…SAGR), 756-856 (NNNI…TQGI), and 891-927 (ALGG…VEPL). A compositionally biased stretch (low complexity) spans 435 to 451 (NSTNSTSNSNSNTNDST). The span at 452–462 (GPSETSSTNGL) shows a compositional bias: polar residues. The segment covering 536-557 (QHHHQHHFHHHHHHHHHHHNHG) has biased composition (basic residues). Residues 564 to 574 (AEATAAVQQMA) are compositionally biased toward low complexity. Basic and acidic residues-rich tracts occupy residues 677–688 (RRSERQKEKLTD), 698–707 (QQKKEQKQQD), and 722–735 (QPEK…EQQK). Low complexity predominate over residues 756–821 (NNNIATTTNS…SSIPSSTSSE (66 aa)). Polar residues-rich tracts occupy residues 822–834 (NQQQ…SCSP) and 911–923 (EPTT…TISN). Phosphoserine is present on residues serine 831 and serine 833. Phosphothreonine is present on threonine 930. Disordered regions lie at residues 956-988 (SLSN…NLTG), 1006-1188 (EHGN…PNGK), 1212-1233 (SPGQ…GGSG), and 1263-1300 (QISQ…HGQK). Positions 1009–1029 (NDDDEDEEEDDEEPAAEEEEE) are enriched in acidic residues. The span at 1041-1055 (KKQRKKQRSRSRSSQ) shows a compositional bias: basic residues. 2 stretches are compositionally biased toward low complexity: residues 1117-1145 (ASST…STSA) and 1161-1178 (SPSS…TSTT). Residues 1289–1300 (SHHHTNNHHGQK) are compositionally biased toward basic residues.

This sequence belongs to the class V-like SAM-binding methyltransferase superfamily. Histone-lysine methyltransferase family. Suvar4-20 subfamily.

The protein localises to the nucleus. The protein resides in the chromosome. It carries out the reaction L-lysyl(20)-[histone H4] + S-adenosyl-L-methionine = N(6)-methyl-L-lysyl(20)-[histone H4] + S-adenosyl-L-homocysteine + H(+). It catalyses the reaction N(6)-methyl-L-lysyl(20)-[histone H4] + S-adenosyl-L-methionine = N(6),N(6)-dimethyl-L-lysyl(20)-[histone H4] + S-adenosyl-L-homocysteine + H(+). The catalysed reaction is N(6),N(6)-dimethyl-L-lysyl(20)-[histone H4] + S-adenosyl-L-methionine = N(6),N(6),N(6)-trimethyl-L-lysyl(20)-[histone H4] + S-adenosyl-L-homocysteine + H(+). Functionally, histone methyltransferase that specifically trimethylates 'Lys-20' of histone H4. H4 'Lys-20' trimethylation represents a specific tag for epigenetic transcriptional repression. Mainly functions in pericentric heterochromatin regions, thereby playing a central role in the establishment of constitutive heterochromatin in these regions. Acts as a dominant suppressor of position-effect variegation. The polypeptide is Histone-lysine N-methyltransferase Suv4-20 (Hmt4-20) (Drosophila melanogaster (Fruit fly)).